Consider the following 76-residue polypeptide: RNA-binding protein KhpA (76 aa).

The KH domain occupies 30–76 (GEVLEVRVNPEDLGRVIGRSGRTAKALRTLVTALADGRRVRVDVVDD).

The protein belongs to the KhpA RNA-binding protein family.

The protein resides in the cytoplasm. Functionally, a probable RNA-binding protein. This chain is RNA-binding protein KhpA, found in Leifsonia xyli subsp. xyli (strain CTCB07).